Here is a 170-residue protein sequence, read N- to C-terminus: Photosystem I assembly protein Ycf3 (170 aa).

TPR repeat units follow at residues Ala-35–Pro-68, Ser-72–Leu-105, and Gly-120–Asn-153.

It belongs to the Ycf3 family.

The protein localises to the plastid. Its subcellular location is the chloroplast thylakoid membrane. Functionally, essential for the assembly of the photosystem I (PSI) complex. May act as a chaperone-like factor to guide the assembly of the PSI subunits. This Oryza nivara (Indian wild rice) protein is Photosystem I assembly protein Ycf3.